The chain runs to 431 residues: UDP-N-acetylmuramate--L-alanine ligase (431 aa).

108-114 provides a ligand contact to ATP; that stretch reads GAHGKST.

The protein belongs to the MurCDEF family.

The protein resides in the cytoplasm. It catalyses the reaction UDP-N-acetyl-alpha-D-muramate + L-alanine + ATP = UDP-N-acetyl-alpha-D-muramoyl-L-alanine + ADP + phosphate + H(+). Its pathway is cell wall biogenesis; peptidoglycan biosynthesis. Functionally, cell wall formation. This chain is UDP-N-acetylmuramate--L-alanine ligase, found in Campylobacter jejuni (strain RM1221).